The chain runs to 199 residues: Glycerol-3-phosphate acyltransferase (199 aa).

5 consecutive transmembrane segments (helical) span residues Ala-5 to Cys-25, Ala-54 to Phe-74, Ala-82 to Phe-102, Val-114 to Phe-134, and Tyr-154 to Ile-174.

It belongs to the PlsY family. In terms of assembly, probably interacts with PlsX.

It localises to the cell inner membrane. The enzyme catalyses an acyl phosphate + sn-glycerol 3-phosphate = a 1-acyl-sn-glycero-3-phosphate + phosphate. Its pathway is lipid metabolism; phospholipid metabolism. In terms of biological role, catalyzes the transfer of an acyl group from acyl-phosphate (acyl-PO(4)) to glycerol-3-phosphate (G3P) to form lysophosphatidic acid (LPA). This enzyme utilizes acyl-phosphate as fatty acyl donor, but not acyl-CoA or acyl-ACP. The chain is Glycerol-3-phosphate acyltransferase from Haemophilus ducreyi (strain 35000HP / ATCC 700724).